Consider the following 427-residue polypeptide: Zinc finger protein DPF3 (427 aa).

The segment at 182 to 244 is disordered; that stretch reads LENDENADEV…NDAASQDDHD (63 aa). Acidic residues predominate over residues 184–199; that stretch reads NDENADEVNEEEDLEE. A compositionally biased stretch (basic and acidic residues) spans 233–244; that stretch reads RRNDAASQDDHD. The segment at 247–270 adopts a C2H2-type zinc-finger fold; that stretch reads YVCDICGKRYKNRPGLSYHYAHTH. Positions 272 to 301 are disordered; sequence ASEEGDEAREQETRSSPVHRNENHKPQKGP. Over residues 279 to 296 the composition is skewed to basic and acidic residues; that stretch reads AREQETRSSPVHRNENHK. 2 consecutive PHD-type zinc fingers follow at residues 308-368 and 365-415; these read NNYC…CKSC and CKSC…CREL.

This sequence belongs to the requiem/DPF family. In terms of assembly, component of the BAF complex. Interacts with acetylated histones H3 and H4. Component of neuron-specific chromatin remodeling complex (nBAF complex), a subfamily of ATP-dependent SWI/SNF chromatin remodeling complexes. Expressed in the heart and somites.

It is found in the nucleus. Functionally, muscle-specific component of the BAF complex, a multiprotein complex involved in transcriptional activation and repression of select genes by chromatin remodeling (alteration of DNA-nucleosome topology). Specifically binds acetylated lysines on histone 3 and 4. In the complex, it acts as a tissue-specific anchor between histone acetylations and methylations and chromatin remodeling. It thereby probably plays an essential role in heart and skeletal muscle development. Belongs to the neuron-specific chromatin remodeling complex (nBAF complex) and plays a role in neural development. This Gallus gallus (Chicken) protein is Zinc finger protein DPF3 (DPF3).